Consider the following 373-residue polypeptide: Putative glutamate--cysteine ligase 2-1 (373 aa).

Belongs to the glutamate--cysteine ligase type 2 family. YbdK subfamily.

The catalysed reaction is L-cysteine + L-glutamate + ATP = gamma-L-glutamyl-L-cysteine + ADP + phosphate + H(+). Functionally, ATP-dependent carboxylate-amine ligase which exhibits weak glutamate--cysteine ligase activity. This is Putative glutamate--cysteine ligase 2-1 from Legionella pneumophila (strain Paris).